We begin with the raw amino-acid sequence, 98 residues long: Feather keratin 3 (98 aa).

This sequence belongs to the avian keratin family. In terms of assembly, the avian keratins (F-ker, S-ker, C-ker and B-ker) are a complex mixture of very similar polypeptides.

This chain is Feather keratin 3, found in Gallus gallus (Chicken).